Consider the following 312-residue polypeptide: MATERDGGGCLRVAVSIFSIYYWLSALGHVFLGLWMLLDPKRNYILDLVHFSENDPLLKASAYVSLVCGCAQLLVGFLGLCGAVNRSRFLLLAFVMFLIGTFLADVAMGTLSLFYKDKFSNNYMGVYLKNLTYNRYSRDRWVLPLMDTIQFYVYSVKENVREIVKSKYGVMTSEPENKMVTEFIDKLQFYEKCCGSLGPTDYISSRWSQSTNQDSEEIESPLFPVSCCTQITGASALNPLAKSYARCQQIGANRQWRHAVGCSERLMSWFNEQIWIFVGFGFGSALTMMLGICLSCCLISKIRIYHVIRDDY.

The next 4 membrane-spanning stretches (helical) occupy residues 17 to 37 (IFSI…LWML), 64 to 84 (VSLV…CGAV), 89 to 109 (FLLL…VAMG), and 274 to 294 (IWIF…GICL).

This sequence belongs to the tetraspanin (TM4SF) family. Expressed in dopaminergic neurons, head muscles, vulva and spermatheca.

It is found in the cell membrane. Its subcellular location is the cell projection. It localises to the dendrite. The protein localises to the axon. Functionally, protects dopaminergic neurons against oxidative stress-induced neurodegeneration. May act partly via dopamine receptor dop-2 to negatively regulate dopamine reuptake transporter dat-1 activity. Also plays a role in modulating behaviors linked to dopamine signaling. Confers protection against oxidative stress in the whole body. The protein is Tetraspanin-17 of Caenorhabditis elegans.